A 191-amino-acid polypeptide reads, in one-letter code: Peptidyl-tRNA hydrolase (191 aa).

TRNA is bound at residue Tyr17. His22 serves as the catalytic Proton acceptor. TRNA is bound by residues Tyr68, Asn70, and Asn116.

This sequence belongs to the PTH family. In terms of assembly, monomer.

It localises to the cytoplasm. It carries out the reaction an N-acyl-L-alpha-aminoacyl-tRNA + H2O = an N-acyl-L-amino acid + a tRNA + H(+). Hydrolyzes ribosome-free peptidyl-tRNAs (with 1 or more amino acids incorporated), which drop off the ribosome during protein synthesis, or as a result of ribosome stalling. Its function is as follows. Catalyzes the release of premature peptidyl moieties from peptidyl-tRNA molecules trapped in stalled 50S ribosomal subunits, and thus maintains levels of free tRNAs and 50S ribosomes. In Francisella tularensis subsp. mediasiatica (strain FSC147), this protein is Peptidyl-tRNA hydrolase.